A 638-amino-acid chain; its full sequence is LIM domain kinase 2 (638 aa).

LIM zinc-binding domains are found at residues 12-63 (CRGC…CHKD) and 72-124 (CHGC…CGKC). The region spanning 152–239 (LISMPATTEC…TLQLLIEHDP (88 aa)) is the PDZ domain. Thr-210 is modified (phosphothreonine). Residues 255–304 (PHMQSTGHTLMLSTLDTKENQEGTLRRRSLRRSNSISKSPGPSSPKEPLL) are disordered. Residues 257 to 269 (MQSTGHTLMLSTL) are compositionally biased toward polar residues. A compositionally biased stretch (basic and acidic residues) spans 270–279 (DTKENQEGTL). Residues 286–304 (RSNSISKSPGPSSPKEPLL) are compositionally biased toward low complexity. A phosphoserine mark is found at Ser-293 and Ser-298. In terms of domain architecture, Protein kinase spans 331-608 (LIHGEVLGKG…DSFEALSLFL (278 aa)). ATP-binding positions include 337 to 345 (LGKGFFGQA) and Lys-360. Asp-451 is an active-site residue. Thr-505 carries the phosphothreonine; by ROCK1 and CDC42BP modification.

Belongs to the protein kinase superfamily. TKL Ser/Thr protein kinase family. In terms of assembly, binds ROCK1 and MARF1. Interacts with NISCH. Post-translationally, phosphorylated on serine and/or threonine residues by ROCK1. Specifically expressed in the testes.

It localises to the cytoplasm. The protein resides in the cytoskeleton. The protein localises to the spindle. It is found in the microtubule organizing center. Its subcellular location is the centrosome. It localises to the nucleus. The protein resides in the perinuclear region. The catalysed reaction is L-seryl-[protein] + ATP = O-phospho-L-seryl-[protein] + ADP + H(+). It catalyses the reaction L-threonyl-[protein] + ATP = O-phospho-L-threonyl-[protein] + ADP + H(+). Serine/threonine-protein kinase that plays an essential role in the regulation of actin filament dynamics. Acts downstream of several Rho family GTPase signal transduction pathways. Involved in astral microtubule organization and mitotic spindle orientation during early stages of mitosis by mediating phosphorylation of TPPP. Displays serine/threonine-specific phosphorylation of myelin basic protein and histone (MBP) in vitro. Suppresses ciliogenesis via multiple pathways; phosphorylation of CFL1, suppression of directional trafficking of ciliary vesicles to the ciliary base, and by facilitating YAP1 nuclear localization where it acts as a transcriptional corepressor of the TEAD4 target genes AURKA and PLK1. The sequence is that of LIM domain kinase 2 (Limk2) from Mus musculus (Mouse).